The primary structure comprises 283 residues: uncharacterized protein (283 aa).

This sequence belongs to the glycosyltransferase 2 family. WaaE/KdtX subfamily.

This is an uncharacterized protein from Rickettsia felis (strain ATCC VR-1525 / URRWXCal2) (Rickettsia azadi).